Consider the following 819-residue polypeptide: MDTEGFGELLQQAEQLAAETEGISELPHVERNLQEIQQAGERLCSRTLTRTSQETADVKASVLLGSRGLDISHISQRLESLSAATTFEPLEPVKDTDIQGFLKNEKDNALLSAIEESRKRTFGMAEEYHRESMLVEWEQVKQRILHTLLASGEDALDFTQESEPSYISDVGPPGRSSLDNIEMAYARQIYIYNEKIVNGHLQPNLVDLCASVAELDDKSISDMWTMVKQMTDVLLTPATDALKNRSSVEVRMEFVRQALAYLEQSYKNYTLVTVFGNLHQAQLGGVPGTYQLVRSFLNIKLPAPLPGLQDGEVEGHPVWALIYYCMRCGDLLAASQVVNRAQHQLGEFKTWFQEYMNSKDRRLSPATENKLRLHYRRALRNNTDPYKRAVYCIIGRCDVTDNQSEVADKTEDYLWLKLNQVCFDDDGTSSPQDRLTLSQFQKQLLEDYGESHFTVNQQPFLYFQVLFLTAQFEAAIAFLFRMERLRCHAVHVALVLFELKLLLKSSGQSAQLLSHEPGDPPCMRRLNFVRLLMLYTRKFESTDPREALQYFYFLRDEKDSQGENMFLRCVSELVIESREFDMILGKLENDGSRKPGVIDKFTSDTKPIINKVASVAENKGLFEEAAKLYDLAKNADKVLELMNKLLSPVVPQISAPQSNKERLKNMALSIAERYRAQGISANKFVDSTFYLLLDLITFFDEYHSGHIDRAFDIIERLKLVPLNQESVEERVAAFRNFSDEIRHNLSEVLLATMNILFTQFKRLKGTSPSSSSRPQRVIEDRDSQLRSQACTLITFAGMIPYRTSGDTNARLVQMEVLMN.

A Phosphothreonine modification is found at Thr49. Ser52, Ser66, Ser72, Ser75, Ser80, Ser430, and Ser767 each carry phosphoserine.

This sequence belongs to the nucleoporin interacting component (NIC) family. In terms of assembly, part of the nuclear pore complex (NPC). Component of the p62 complex, a complex composed of NUP62 and NUP54. Forms a complex with NUP35, NUP155, NUP205 and lamin B; the interaction with NUP35 is direct. Does not interact with TPR. Interacts with SMAD4 and IPO7; translocates SMAD4 to the nucleus through the NPC upon BMP7 stimulation resulting in activation of SMAD4 signaling.

It localises to the nucleus membrane. The protein resides in the nucleus. The protein localises to the nuclear pore complex. It is found in the nucleus envelope. Functionally, plays a role in the nuclear pore complex (NPC) assembly and/or maintenance. May anchor nucleoporins, but not NUP153 and TPR, to the NPC. During renal development, regulates podocyte migration and proliferation through SMAD4 signaling. The polypeptide is Nuclear pore complex protein Nup93 (NUP93) (Pongo abelii (Sumatran orangutan)).